A 115-amino-acid chain; its full sequence is SOSS complex subunit C homolog (115 aa).

Belongs to the SOSS-C family.

The protein is SOSS complex subunit C homolog of Drosophila grimshawi (Hawaiian fruit fly).